A 459-amino-acid chain; its full sequence is Putrescine aminotransferase (459 aa).

Pyridoxal 5'-phosphate contacts are provided by residues Gly-150–Thr-151 and Gln-274. At Lys-300 the chain carries N6-(pyridoxal phosphate)lysine. Pyridoxal 5'-phosphate is bound at residue Thr-332.

The protein belongs to the class-III pyridoxal-phosphate-dependent aminotransferase family. Putrescine aminotransferase subfamily. Requires pyridoxal 5'-phosphate as cofactor.

The enzyme catalyses an alkane-alpha,omega-diamine + 2-oxoglutarate = an omega-aminoaldehyde + L-glutamate. It catalyses the reaction putrescine + 2-oxoglutarate = 1-pyrroline + L-glutamate + H2O. The catalysed reaction is cadaverine + 2-oxoglutarate = 5-aminopentanal + L-glutamate. It functions in the pathway amine and polyamine degradation; putrescine degradation; 4-aminobutanal from putrescine (transaminase route): step 1/1. In terms of biological role, catalyzes the aminotransferase reaction from putrescine to 2-oxoglutarate, leading to glutamate and 4-aminobutanal, which spontaneously cyclizes to form 1-pyrroline. This is the first step in one of two pathways for putrescine degradation, where putrescine is converted into 4-aminobutanoate (gamma-aminobutyrate or GABA) via 4-aminobutanal. Also functions as a cadaverine transaminase in a a L-lysine degradation pathway to succinate that proceeds via cadaverine, glutarate and L-2-hydroxyglutarate. The chain is Putrescine aminotransferase from Klebsiella pneumoniae subsp. pneumoniae (strain ATCC 700721 / MGH 78578).